The primary structure comprises 156 residues: MDIIGQRGDPQIGNLATPVNSSRLSLAFIRNLPAYRRGLSANRRGLEVGMAHGYFLYGPFAILGPLRNTEYASTGGLLSAVAMISILTIALSLYASVEVGKPIETLTTPDVPEDLGTSVGWGEFANGFFIGGSGGVIFAYLLCQALYFDLIQKILG.

A run of 2 helical transmembrane segments spans residues 75–95 (GGLL…SLYA) and 128–148 (FFIG…ALYF).

Belongs to the PsaL family.

It localises to the cellular thylakoid membrane. The sequence is that of Photosystem I reaction center subunit XI from Crocosphaera subtropica (strain ATCC 51142 / BH68) (Cyanothece sp. (strain ATCC 51142)).